Reading from the N-terminus, the 262-residue chain is Phosphonates import ATP-binding protein PhnC (262 aa).

The 249-residue stretch at 5–253 (IRVEKLAKTF…RFDHLYRSIN (249 aa)) folds into the ABC transporter domain. Residue 37 to 44 (GPSGSGKS) coordinates ATP.

This sequence belongs to the ABC transporter superfamily. Phosphonates importer (TC 3.A.1.9.1) family. The complex is composed of two ATP-binding proteins (PhnC), two transmembrane proteins (PhnE) and a solute-binding protein (PhnD).

Its subcellular location is the cell inner membrane. It catalyses the reaction phosphonate(out) + ATP + H2O = phosphonate(in) + ADP + phosphate + H(+). Its function is as follows. Part of the ABC transporter complex PhnCDE involved in phosphonates import. Responsible for energy coupling to the transport system. This Escherichia coli (strain UTI89 / UPEC) protein is Phosphonates import ATP-binding protein PhnC.